A 1045-amino-acid chain; its full sequence is Suppression of tumorigenicity 18 protein (1045 aa).

3 disordered regions span residues 38-90 (KKRR…NDHA), 158-228 (KAES…YNRK), and 340-364 (PRVT…RREA). A compositionally biased stretch (basic residues) spans 52-63 (NKRKSLLMKPRH). 2 stretches are compositionally biased toward basic and acidic residues: residues 69-90 (GCKE…NDHA) and 159-177 (AESD…NGRD). 6 CCHHC-type zinc fingers span residues 357-400 (PRPE…PLEI), 401-444 (LAMH…KLAM), 713-756 (RDLK…LKSL), 757-800 (MAAN…GIKM), 805-848 (EEKE…QKEN), and 858-901 (KLNK…IKKV). Residues Cys366, Cys371, His384, Cys390, Cys410, Cys415, His428, Cys434, Cys722, Cys727, His740, Cys746, Cys766, Cys771, His784, Cys790, Cys814, Cys819, His832, Cys838, Cys867, Cys872, His885, and Cys891 each coordinate Zn(2+). The stretch at 918 to 987 (IDGDEEIRHL…KELAGLSQAL (70 aa)) forms a coiled coil.

It belongs to the MYT1 family.

It is found in the nucleus. Its function is as follows. Repressor that binds to DNA sequences containing a bipartite element consisting of a direct repeat of the sequence 5'-AAAGTTT-3' separated by 2-9 nucleotides. Represses basal transcription activity from target promoters. The sequence is that of Suppression of tumorigenicity 18 protein (St18) from Mus musculus (Mouse).